A 377-amino-acid polypeptide reads, in one-letter code: ATP synthase gamma chain, chloroplastic (377 aa).

A chloroplast-targeting transit peptide spans 1–55 (MSCSNLTMLVSSKPSLSDSSALSFRSSVSPFQLPNHNTSGPSNPSRSSSVTPVHC). The interval 30-52 (PFQLPNHNTSGPSNPSRSSSVTP) is disordered. Residues 37–52 (NTSGPSNPSRSSSVTP) show a composition bias toward low complexity. The active site involves Cys-143. Cysteines 253 and 259 form a disulfide.

Belongs to the ATPase gamma chain family. F-type ATPases have 2 components, CF(1) - the catalytic core - and CF(0) - the membrane proton channel. CF(1) has five subunits: alpha(3), beta(3), gamma(1), delta(1), epsilon(1). CF(0) has four main subunits: a, b, b' and c.

The protein localises to the plastid. It localises to the chloroplast thylakoid membrane. Functionally, produces ATP from ADP in the presence of a proton gradient across the membrane. The gamma chain is believed to be important in regulating ATPase activity and the flow of protons through the CF(0) complex. In Nicotiana tabacum (Common tobacco), this protein is ATP synthase gamma chain, chloroplastic (ATPC).